A 683-amino-acid chain; its full sequence is Capsid polyprotein VP90 (683 aa).

Over residues 1 to 13 the composition is skewed to low complexity; the sequence is MAGGATAPAGAKP. Disordered regions lie at residues 1–45 and 391–413; these read MAGG…KQEL and PNAESNNLPPPTTGAQPQPQPPA. Residues 14–39 show a composition bias toward basic residues; it reads KQPKQKQKKPSSQARKKPSQKQKAMK. The segment covering 398–413 has biased composition (pro residues); the sequence is LPPPTTGAQPQPQPPA.

The protein belongs to the astroviridae capsid polyprotein family. Post-translationally, specific enzymatic cleavages by the host yield mature proteins.

It is found in the virion. Its function is as follows. Self-assembles to form an icosahedral T=3 immature capsid. The polypeptide is Capsid polyprotein VP90 (Gallus gallus (Chicken)).